A 113-amino-acid polypeptide reads, in one-letter code: T cell receptor alpha variable 13-2 (113 aa).

An N-terminal signal peptide occupies residues Met1 to Gly21. An Ig-like domain is found at Glu22 to Asn113. A disulfide bridge connects residues Cys43 and Cys110. Asn87 is a glycosylation site (N-linked (GlcNAc...) asparagine).

Alpha-beta TR is a heterodimer composed of an alpha and beta chain; disulfide-linked. The alpha-beta TR is associated with the transmembrane signaling CD3 coreceptor proteins to form the TR-CD3 (TcR or TCR). The assembly of alpha-beta TR heterodimers with CD3 occurs in the endoplasmic reticulum where a single alpha-beta TR heterodimer associates with one CD3D-CD3E heterodimer, one CD3G-CD3E heterodimer and one CD247 homodimer forming a stable octameric structure. CD3D-CD3E and CD3G-CD3E heterodimers preferentially associate with TR alpha and TR beta chains, respectively. The association of the CD247 homodimer is the last step of TcR assembly in the endoplasmic reticulum and is required for transport to the cell surface.

It localises to the cell membrane. Its function is as follows. V region of the variable domain of T cell receptor (TR) alpha chain that participates in the antigen recognition. Alpha-beta T cell receptors are antigen specific receptors which are essential to the immune response and are present on the cell surface of T lymphocytes. Recognize peptide-major histocompatibility (MH) (pMH) complexes that are displayed by antigen presenting cells (APC), a prerequisite for efficient T cell adaptive immunity against pathogens. Binding of alpha-beta TR to pMH complex initiates TR-CD3 clustering on the cell surface and intracellular activation of LCK that phosphorylates the ITAM motifs of CD3G, CD3D, CD3E and CD247 enabling the recruitment of ZAP70. In turn ZAP70 phosphorylates LAT, which recruits numerous signaling molecules to form the LAT signalosome. The LAT signalosome propagates signal branching to three major signaling pathways, the calcium, the mitogen-activated protein kinase (MAPK) kinase and the nuclear factor NF-kappa-B (NF-kB) pathways, leading to the mobilization of transcription factors that are critical for gene expression and essential for T cell growth and differentiation. The T cell repertoire is generated in the thymus, by V-(D)-J rearrangement. This repertoire is then shaped by intrathymic selection events to generate a peripheral T cell pool of self-MH restricted, non-autoaggressive T cells. Post-thymic interaction of alpha-beta TR with the pMH complexes shapes TR structural and functional avidity. The chain is T cell receptor alpha variable 13-2 from Homo sapiens (Human).